The primary structure comprises 453 residues: MKRRKYFGTDGIRGKVGSMPITPDFILKLGWAAGKVLSRFSGGRSNYIIIGKDTRISGYMLESALESGLAAAGLSAALTGPMPTPAIAYLTRTFRAEAGIVISASHNPFYDNGIKFFSIKGTKLDNEVEHSIEIELEKCLTCVDPKELGKASRIVDAAGRYIEFCKGTFPAHLSLRKLKIIVDCANGATYHIAPSVFRELGANVTTIACRPNGVNINKECGTTDIRQLRAHVLAKKADLGIAYDGDGDRVIMVDHFGNKVDGDQMLYIIAREKLHCKQLTGGIVGTLMSNMGLVLALKQLNIPFIRSNVGDRCVLAMLKKQGWNIGGENSGHIVLLDKTTTGDGIIVALQVLSAMVNNCVSLHELCNDVSLLPQILVNVYCSSIKSPLESDLVRKETKAVEQELSEQGRVLLRQSGTEPYIRIMVEGNCCYGKILYLANRIASVIRSEIKSIQ.

The Phosphoserine intermediate role is filled by S105. Mg(2+) is bound by residues S105, D244, D246, and D248. The residue at position 105 (S105) is a Phosphoserine.

The protein belongs to the phosphohexose mutase family. Mg(2+) is required as a cofactor. Activated by phosphorylation.

It carries out the reaction alpha-D-glucosamine 1-phosphate = D-glucosamine 6-phosphate. Catalyzes the conversion of glucosamine-6-phosphate to glucosamine-1-phosphate. The protein is Phosphoglucosamine mutase of Blochmanniella pennsylvanica (strain BPEN).